The primary structure comprises 217 residues: Peptide methionine sulfoxide reductase MsrA 1 (217 aa).

Cys57 is an active-site residue.

The protein belongs to the MsrA Met sulfoxide reductase family.

The enzyme catalyses L-methionyl-[protein] + [thioredoxin]-disulfide + H2O = L-methionyl-(S)-S-oxide-[protein] + [thioredoxin]-dithiol. The catalysed reaction is [thioredoxin]-disulfide + L-methionine + H2O = L-methionine (S)-S-oxide + [thioredoxin]-dithiol. Has an important function as a repair enzyme for proteins that have been inactivated by oxidation. Catalyzes the reversible oxidation-reduction of methionine sulfoxide in proteins to methionine. This is Peptide methionine sulfoxide reductase MsrA 1 (msrA1) from Rhizobium meliloti (strain 1021) (Ensifer meliloti).